Consider the following 235-residue polypeptide: Aspartate/glutamate leucyltransferase (235 aa).

The protein belongs to the R-transferase family. Bpt subfamily.

It localises to the cytoplasm. The catalysed reaction is N-terminal L-glutamyl-[protein] + L-leucyl-tRNA(Leu) = N-terminal L-leucyl-L-glutamyl-[protein] + tRNA(Leu) + H(+). The enzyme catalyses N-terminal L-aspartyl-[protein] + L-leucyl-tRNA(Leu) = N-terminal L-leucyl-L-aspartyl-[protein] + tRNA(Leu) + H(+). In terms of biological role, functions in the N-end rule pathway of protein degradation where it conjugates Leu from its aminoacyl-tRNA to the N-termini of proteins containing an N-terminal aspartate or glutamate. The protein is Aspartate/glutamate leucyltransferase of Shewanella putrefaciens (strain CN-32 / ATCC BAA-453).